The sequence spans 194 residues: Phosphoheptose isomerase (194 aa).

Residues 31–186 (ICQRFQAGNK…CEQVESRLFA (156 aa)) enclose the SIS domain. Residue 46–48 (NGG) coordinates substrate. Positions 55 and 59 each coordinate Zn(2+). Residues glutamate 59, 88–89 (ND), 114–116 (STS), serine 119, and glutamine 166 contribute to the substrate site. Glutamine 166 and histidine 174 together coordinate Zn(2+).

It belongs to the SIS family. GmhA subfamily. It depends on Zn(2+) as a cofactor.

The protein localises to the cytoplasm. The enzyme catalyses 2 D-sedoheptulose 7-phosphate = D-glycero-alpha-D-manno-heptose 7-phosphate + D-glycero-beta-D-manno-heptose 7-phosphate. It functions in the pathway carbohydrate biosynthesis; D-glycero-D-manno-heptose 7-phosphate biosynthesis; D-glycero-alpha-D-manno-heptose 7-phosphate and D-glycero-beta-D-manno-heptose 7-phosphate from sedoheptulose 7-phosphate: step 1/1. Catalyzes the isomerization of sedoheptulose 7-phosphate in D-glycero-D-manno-heptose 7-phosphate. The polypeptide is Phosphoheptose isomerase (Synechocystis sp. (strain ATCC 27184 / PCC 6803 / Kazusa)).